Here is a 375-residue protein sequence, read N- to C-terminus: MAFTMRAPAPRATAQSRVTANRARRSLVVRADKDKTVVIGLAADSGCGKSTFMRRMTSIFGGVPKPPAGGNPDSNTLISDMTTVICLDDYHCLDRNGRKVKGVTALAPEAQNFDLMYNQVKALKEGKSVDKPIYNHVSGLIDAPEKIESPPILVIEGLHPFYDKRVAELLDFKIYLDISDDIKFAWKIQRDMAERGHSLESIKSSIAARKPDFDAYIDPQKKDADMIIQVLPTQLVPDDKGQYLRVRLIMKEGSKMFDPVYLFDEGSTISWIPCGRKLTCSFPGIKMFYGPDTWYGQEVSVLEMDGQFDKLEELIYVESHLSNTSAKFYGEITQQMLKNSGFPGSNNGTGLFQTIVGLKVREVYERIVKKDVVPV.

The N-terminal 31 residues, 1–31 (MAFTMRAPAPRATAQSRVTANRARRSLVVRA), are a transit peptide targeting the chloroplast. The cysteines at positions 47 and 86 are disulfide-linked.

It belongs to the phosphoribulokinase family. In terms of assembly, component of a complex that contains two dimers of PRK, two tetramers of GAPDH and CP12.

The protein localises to the plastid. It is found in the chloroplast. It catalyses the reaction D-ribulose 5-phosphate + ATP = D-ribulose 1,5-bisphosphate + ADP + H(+). It participates in carbohydrate biosynthesis; Calvin cycle. With respect to regulation, light regulated via thioredoxin by reversible oxidation/reduction of sulfhydryl/disulfide groups. This chain is Phosphoribulokinase, chloroplastic (PRKA), found in Chlamydomonas reinhardtii (Chlamydomonas smithii).